The sequence spans 147 residues: Large ribosomal subunit protein uL16 (147 aa).

The interval 1–20 is disordered; it reads MLMPKKVKHRKVQRGRMKGK.

It belongs to the universal ribosomal protein uL16 family. As to quaternary structure, part of the 50S ribosomal subunit.

Functionally, binds 23S rRNA and is also seen to make contacts with the A and possibly P site tRNAs. The sequence is that of Large ribosomal subunit protein uL16 from Clostridium kluyveri (strain ATCC 8527 / DSM 555 / NBRC 12016 / NCIMB 10680 / K1).